The primary structure comprises 255 residues: Phosphate import ATP-binding protein PstB (255 aa).

The region spanning 9-250 (IAVQNLNFYY…PKIQRTEDYI (242 aa)) is the ABC transporter domain. Residue 41 to 48 (GPSGCGKS) coordinates ATP.

This sequence belongs to the ABC transporter superfamily. Phosphate importer (TC 3.A.1.7) family. As to quaternary structure, the complex is composed of two ATP-binding proteins (PstB), two transmembrane proteins (PstC and PstA) and a solute-binding protein (PstS).

It localises to the cell inner membrane. The catalysed reaction is phosphate(out) + ATP + H2O = ADP + 2 phosphate(in) + H(+). Functionally, part of the ABC transporter complex PstSACB involved in phosphate import. Responsible for energy coupling to the transport system. This Haemophilus influenzae (strain 86-028NP) protein is Phosphate import ATP-binding protein PstB.